A 383-amino-acid chain; its full sequence is Putative glutamate--cysteine ligase 2-2 (383 aa).

Belongs to the glutamate--cysteine ligase type 2 family. YbdK subfamily.

It carries out the reaction L-cysteine + L-glutamate + ATP = gamma-L-glutamyl-L-cysteine + ADP + phosphate + H(+). In terms of biological role, ATP-dependent carboxylate-amine ligase which exhibits weak glutamate--cysteine ligase activity. This is Putative glutamate--cysteine ligase 2-2 from Paenarthrobacter aurescens (strain TC1).